A 276-amino-acid polypeptide reads, in one-letter code: Large ribosomal subunit protein uL2 (276 aa).

Positions 224-276 are disordered; it reads AMNPVDHPLGGGEGKSSGGRHPVTPWGKPTKGYKTRNKKKPSSKLIVKRRGQK. Residues 254-276 show a composition bias toward basic residues; the sequence is KGYKTRNKKKPSSKLIVKRRGQK.

The protein belongs to the universal ribosomal protein uL2 family. Part of the 50S ribosomal subunit. Forms a bridge to the 30S subunit in the 70S ribosome.

One of the primary rRNA binding proteins. Required for association of the 30S and 50S subunits to form the 70S ribosome, for tRNA binding and peptide bond formation. It has been suggested to have peptidyltransferase activity; this is somewhat controversial. Makes several contacts with the 16S rRNA in the 70S ribosome. The polypeptide is Large ribosomal subunit protein uL2 (Solidesulfovibrio magneticus (strain ATCC 700980 / DSM 13731 / RS-1) (Desulfovibrio magneticus)).